A 155-amino-acid polypeptide reads, in one-letter code: Small ribosomal subunit protein uS7c (155 aa).

The protein belongs to the universal ribosomal protein uS7 family. Part of the 30S ribosomal subunit.

It is found in the plastid. Its subcellular location is the chloroplast. Functionally, one of the primary rRNA binding proteins, it binds directly to 16S rRNA where it nucleates assembly of the head domain of the 30S subunit. The sequence is that of Small ribosomal subunit protein uS7c (rps7) from Schisandra chinensis (Chinese magnolia vine).